A 384-amino-acid chain; its full sequence is Glucans biosynthesis protein C (384 aa).

10 consecutive transmembrane segments (helical) span residues 17 to 37 (AWLM…THSW), 54 to 74 (FIHA…SYML), 91 to 111 (VGIP…ILLQ), 140 to 160 (LWFL…FTWF), 173 to 193 (AISL…YAAI), 212 to 232 (FIVM…LAFI), 240 to 260 (FTTP…AYLL), 274 to 294 (TESV…FSLG), 311 to 331 (ASLF…AYIT), and 338 to 358 (LIGF…LYEI).

This sequence belongs to the acyltransferase 3 family. OpgC subfamily.

The protein localises to the cell membrane. The protein operates within glycan metabolism; osmoregulated periplasmic glucan (OPG) biosynthesis. Necessary for the succinyl substitution of periplasmic glucans. Could catalyze the transfer of succinyl residues from the cytoplasmic side of the membrane to the nascent glucan backbones on the periplasmic side of the membrane. In Salmonella choleraesuis (strain SC-B67), this protein is Glucans biosynthesis protein C.